We begin with the raw amino-acid sequence, 185 residues long: uncharacterized protein (185 aa).

The 139-residue stretch at 39 to 177 (LWHASAGVLV…SWPFVPDSRA (139 aa)) folds into the Nudix hydrolase domain. The short motif at 77 to 99 (GGVVDPGETPQETAIREVGEELG) is the Nudix box element. 2 residues coordinate Mg(2+): Glu93 and Glu97.

This sequence belongs to the Nudix hydrolase family. It depends on Mg(2+) as a cofactor.

This is an uncharacterized protein from Rhodococcus erythropolis (Arthrobacter picolinophilus).